A 46-amino-acid polypeptide reads, in one-letter code: HIAHHTLPCKCPICGKPFAPWLLQGHIRTHTGESPSVCQHCNRAFA.

3 consecutive C2H2-type zinc fingers follow at residues 1–4, 9–30, and 36–46; these read HIAH, CKCP…IRTH, and SVCQHCNRAFA.

The protein belongs to the snail C2H2-type zinc-finger protein family.

The protein resides in the nucleus. In Lithobius forficatus (Centipede), this protein is Escargot/snail protein homolog.